We begin with the raw amino-acid sequence, 348 residues long: Uroporphyrinogen decarboxylase (348 aa).

Residues 27–31 (RQAGR), Phe-46, Asp-76, Tyr-152, Ser-207, and His-320 contribute to the substrate site.

The protein belongs to the uroporphyrinogen decarboxylase family. As to quaternary structure, homodimer.

It is found in the cytoplasm. The catalysed reaction is uroporphyrinogen III + 4 H(+) = coproporphyrinogen III + 4 CO2. It participates in porphyrin-containing compound metabolism; protoporphyrin-IX biosynthesis; coproporphyrinogen-III from 5-aminolevulinate: step 4/4. Functionally, catalyzes the decarboxylation of four acetate groups of uroporphyrinogen-III to yield coproporphyrinogen-III. The protein is Uroporphyrinogen decarboxylase of Bacillus anthracis.